The chain runs to 235 residues: RNA-free ribonuclease P (235 aa).

It belongs to the HARP family.

The catalysed reaction is Endonucleolytic cleavage of RNA, removing 5'-extranucleotides from tRNA precursor.. In terms of biological role, RNA-free RNase P that catalyzes the removal of the 5'-leader sequence from pre-tRNA to produce the mature 5'-terminus. This is RNA-free ribonuclease P from Methanothrix thermoacetophila (strain DSM 6194 / JCM 14653 / NBRC 101360 / PT) (Methanosaeta thermophila).